We begin with the raw amino-acid sequence, 155 residues long: SsrA-binding protein (155 aa).

This sequence belongs to the SmpB family.

The protein localises to the cytoplasm. Its function is as follows. Required for rescue of stalled ribosomes mediated by trans-translation. Binds to transfer-messenger RNA (tmRNA), required for stable association of tmRNA with ribosomes. tmRNA and SmpB together mimic tRNA shape, replacing the anticodon stem-loop with SmpB. tmRNA is encoded by the ssrA gene; the 2 termini fold to resemble tRNA(Ala) and it encodes a 'tag peptide', a short internal open reading frame. During trans-translation Ala-aminoacylated tmRNA acts like a tRNA, entering the A-site of stalled ribosomes, displacing the stalled mRNA. The ribosome then switches to translate the ORF on the tmRNA; the nascent peptide is terminated with the 'tag peptide' encoded by the tmRNA and targeted for degradation. The ribosome is freed to recommence translation, which seems to be the essential function of trans-translation. In Streptococcus agalactiae serotype Ia (strain ATCC 27591 / A909 / CDC SS700), this protein is SsrA-binding protein.